Consider the following 185-residue polypeptide: 3-hydroxyanthranilate 3,4-dioxygenase (185 aa).

An O2-binding site is contributed by R44. H48, E54, and H95 together coordinate Fe cation. E54 contributes to the substrate binding site. R99 and E109 together coordinate substrate. Positions 124, 127, 161, and 164 each coordinate a divalent metal cation.

It belongs to the 3-HAO family. The cofactor is Fe(2+).

Its subcellular location is the cytoplasm. It carries out the reaction 3-hydroxyanthranilate + O2 = (2Z,4Z)-2-amino-3-carboxymuconate 6-semialdehyde. Its pathway is cofactor biosynthesis; NAD(+) biosynthesis; quinolinate from L-kynurenine: step 3/3. Catalyzes the oxidative ring opening of 3-hydroxyanthranilate to 2-amino-3-carboxymuconate semialdehyde, which spontaneously cyclizes to quinolinate. This is 3-hydroxyanthranilate 3,4-dioxygenase from Podospora anserina (strain S / ATCC MYA-4624 / DSM 980 / FGSC 10383) (Pleurage anserina).